The sequence spans 154 residues: Superoxide dismutase [Cu-Zn] (154 aa).

Residues His47, His49, and His64 each contribute to the Cu cation site. Cys58 and Cys147 are disulfide-bonded. Positions 64, 72, 81, and 84 each coordinate Zn(2+). His121 is a binding site for Cu cation. Arg144 lines the substrate pocket.

Belongs to the Cu-Zn superoxide dismutase family. Homodimer. The cofactor is Cu cation. Zn(2+) is required as a cofactor.

It is found in the cytoplasm. The catalysed reaction is 2 superoxide + 2 H(+) = H2O2 + O2. Destroys radicals which are normally produced within the cells and which are toxic to biological systems. This chain is Superoxide dismutase [Cu-Zn] (SOD1), found in Podospora anserina (Pleurage anserina).